Consider the following 306-residue polypeptide: Glycine--tRNA ligase alpha subunit (306 aa).

Belongs to the class-II aminoacyl-tRNA synthetase family. Tetramer of two alpha and two beta subunits.

Its subcellular location is the cytoplasm. The catalysed reaction is tRNA(Gly) + glycine + ATP = glycyl-tRNA(Gly) + AMP + diphosphate. This chain is Glycine--tRNA ligase alpha subunit, found in Aliivibrio fischeri (strain ATCC 700601 / ES114) (Vibrio fischeri).